A 580-amino-acid chain; its full sequence is DNA ligase B (580 aa).

The N6-AMP-lysine intermediate role is filled by K135.

Belongs to the NAD-dependent DNA ligase family. LigB subfamily.

The enzyme catalyses NAD(+) + (deoxyribonucleotide)n-3'-hydroxyl + 5'-phospho-(deoxyribonucleotide)m = (deoxyribonucleotide)n+m + AMP + beta-nicotinamide D-nucleotide.. Its function is as follows. Catalyzes the formation of phosphodiester linkages between 5'-phosphoryl and 3'-hydroxyl groups in double-stranded DNA using NAD as a coenzyme and as the energy source for the reaction. This is DNA ligase B from Photorhabdus laumondii subsp. laumondii (strain DSM 15139 / CIP 105565 / TT01) (Photorhabdus luminescens subsp. laumondii).